Reading from the N-terminus, the 69-residue chain is Probable Sec-independent protein translocase protein TatE (69 aa).

Residues 1–21 (MEGISIAKLLVIGALIVLLFG) traverse the membrane as a helical segment. Residues 45–69 (DDQPAAKSSAQDEHPAAISETRPKE) are disordered. Positions 54 to 69 (AQDEHPAAISETRPKE) are enriched in basic and acidic residues.

This sequence belongs to the TatA/E family. TatE subfamily.

It localises to the cell inner membrane. Its function is as follows. Part of the twin-arginine translocation (Tat) system that transports large folded proteins containing a characteristic twin-arginine motif in their signal peptide across membranes. TatE shares overlapping functions with TatA. The chain is Probable Sec-independent protein translocase protein TatE from Dickeya chrysanthemi (strain Ech1591) (Dickeya zeae (strain Ech1591)).